The chain runs to 152 residues: SUZ RNA-binding domain-containing (152 aa).

A disordered region spans residues 28–152; that stretch reads KISQRENNNT…DGSQGFRQGR (125 aa). One can recognise an SUZ domain in the interval 42 to 107; sequence RAPVVIQDDS…ARKRILGSAS (66 aa). Basic and acidic residues-rich tracts occupy residues 89–100 and 113–130; these read AQREAEYAEARK and EKPV…EEIR. The SUZ-C domain maps to 111–152; it reads EQEKPVAERPARINQVEEIRQQNNVIRQPLGPDGSQGFRQGR.

The protein belongs to the SZRD1 family.

The polypeptide is SUZ RNA-binding domain-containing (szrd1) (Xenopus laevis (African clawed frog)).